Reading from the N-terminus, the 107-residue chain is Probable antitoxin TacA (107 aa).

The protein belongs to the TacA antitoxin family. Forms a complex with cognate antitoxin TacT.

Functionally, probable antitoxin component of a type II toxin-antitoxin (TA) system. Should neutralize cognate toxin TacT (y4aS). This Sinorhizobium fredii (strain NBRC 101917 / NGR234) protein is Probable antitoxin TacA.